The primary structure comprises 102 residues: DET1- and DDB1-associated protein 1 (102 aa).

Alanine 2 bears the N-acetylalanine mark. Serine 33 and serine 95 each carry phosphoserine. The segment at asparagine 67 to threonine 102 is disordered.

The protein belongs to the DDA1 family. In terms of assembly, component of numerous DCX (DDB1-CUL4-X-box) E3 ubiquitin-protein ligase complexes which consist of a core of DDB1, cullin-4 (CUL4A or CUL4B), DDA1 and RBX1. Component of the DCX(DCAF15) complex, also named CLR4(DCAF15) complex, composed of DCAF15, DDB1, cullin-4 (CUL4A or CUL4B), DDA1 and RBX1. Part of the DDD core complex containing DET1, DDA1 and DDB1; the DDD core complex recruits a specific UBE2E enzyme, such as UBE2E1, UBE2E2 UBE2E3, to form specific DDD-E2 complexes.

It participates in protein modification; protein ubiquitination. In terms of biological role, functions as a component of numerous distinct DCX (DDB1-CUL4-X-box) E3 ubiquitin-protein ligase complexes which mediate the ubiquitination and subsequent proteasomal degradation of target proteins. In the DCX complexes, acts as a scaffolding subunit required to stabilize the complex. The protein is DET1- and DDB1-associated protein 1 of Mus musculus (Mouse).